Consider the following 274-residue polypeptide: MDEIKTLLVDFFPQAKHFGIILIKAVIVFCIGFYFSFFLRNKTMKLLSKKDEILANFVAQVTFILILIITTIIALSTLGVQTTSIITVLGTVGIAVALALKDYLSSIAGGIILIILHPFKKGDIIEISGLEGKVEALNFFNTSLRLHDGRLAVLPNRSVANSNIINSNNTACRRIEWVCGVGYGSDIELVHKTIKDVIDTMEKIDKNMPTFIGITDFGSSSLNFTIRVWAKIEDGIFNVRSELIERIKNALDANHIEIPFNKLDIAIKNQDSSK.

The Periplasmic segment spans residues 1 to 21; that stretch reads MDEIKTLLVDFFPQAKHFGII. A helical membrane pass occupies residues 22–44; the sequence is LIKAVIVFCIGFYFSFFLRNKTM. The Cytoplasmic segment spans residues 45 to 56; it reads KLLSKKDEILAN. Residues 57–77 form a helical membrane-spanning segment; sequence FVAQVTFILILIITTIIALST. Residues 78–79 are Periplasmic-facing; sequence LG. The chain crosses the membrane as a helical span at residues 80–100; that stretch reads VQTTSIITVLGTVGIAVALAL. Residues 101–274 lie on the Cytoplasmic side of the membrane; the sequence is KDYLSSIAGG…IAIKNQDSSK (174 aa).

It belongs to the MscS (TC 1.A.23) family. As to quaternary structure, homoheptamer.

The protein resides in the cell inner membrane. Its function is as follows. Mechanosensitive channel that participates in the regulation of osmotic pressure changes within the cell, opening in response to stretch forces in the membrane lipid bilayer, without the need for other proteins. Contributes to normal resistance to hypoosmotic shock. Forms an ion channel of 1.0 nanosiemens conductance with a slight preference for anions. The protein is Small-conductance mechanosensitive channel (mscS) of Helicobacter pylori (strain UM084).